The following is a 488-amino-acid chain: Palmitoleoyl-protein carboxylesterase notum1 (488 aa).

The N-terminal stretch at 1-20 (MAGALCVTLLLLLSTNTVSG) is a signal peptide. Asparagine 90 carries N-linked (GlcNAc...) asparagine glycosylation. Active-site charge relay system residues include serine 226, aspartate 334, and histidine 383.

Belongs to the pectinacetylesterase family. Notum subfamily. In terms of tissue distribution, expressed in the egg and through cleavage to gastrulation stages. Enriched in the animal (prospective ectoderm) and dorsal regions in early gastrula. Shows a dynamic expression during embryogenesis, in particular during neural induction and antero-posterior (AP) patterning.

The protein localises to the secreted. The catalysed reaction is [Wnt protein]-O-(9Z)-hexadecenoyl-L-serine + H2O = [Wnt protein]-L-serine + (9Z)-hexadecenoate + H(+). Carboxylesterase that acts as a key negative regulator of the Wnt signaling pathway by specifically mediating depalmitoleoylation of WNT proteins. Serine palmitoleoylation of WNT proteins is required for efficient binding to frizzled receptors. Functions in the prospective ectoderm and is required for neural induction. This Xenopus laevis (African clawed frog) protein is Palmitoleoyl-protein carboxylesterase notum1.